The following is a 500-amino-acid chain: MSYFPWLTILVVLPIFAGSLIFFLPHKGNKIVRWYTIAICLLEFLIMTYAFCYHFQLEDPLIQLKEDSKWIDVFDFHWRLGIDGLSLGSILLTGFITTLATLAAWPVTRNSQLFYFLMLAMYSGQIGLFSSRDLLLFFIMWELELIPVYLLLSMWGGKRRLYSATKFILYTAGGSIFFLIGVLGMGLYGSNEPGLDLERLINQSYPTTLEILLYFGFLIAYAVKLPIIPLHTWLPDTHGEAHYSTCMLLAGILLKMGAYGLIRVNMELLPHAHYLFSPWLVIIGAVQIIYAASTSLGQRNFKKRIAYSSVSHMGFIIIGIGSITNIGLNGAILQILSHGFIGATLFFLAGTACDRMRLVYLEELGGISIPMPKIFTMFSSFSMASLALPGMSGFVAELVVFFGLITSPKFMLMPKMLITFVMAIGMILTPIYLLSMLRQMFYGYKLFHVPNKNFVDSGPRELFLLICIFLPVIGIGIYPDFVLSLSVDRVEVLLSNYYTK.

Helical transmembrane passes span 4 to 24 (FPWL…IFFL), 35 to 55 (YTIA…CYHF), 87 to 107 (LGSI…AWPV), 111 to 131 (SQLF…LFSS), 134 to 154 (LLLF…LLSM), 167 to 187 (FILY…GMGL), 211 to 231 (ILLY…IPLH), 242 to 262 (HYST…YGLI), 272 to 292 (AHYL…IYAA), 313 to 333 (MGFI…GAIL), 334 to 354 (QILS…TACD), 386 to 406 (LALP…GLIT), 417 to 437 (LITF…LSML), and 462 to 482 (LFLL…PDFV).

The protein belongs to the complex I subunit 4 family.

Its subcellular location is the plastid. It localises to the chloroplast thylakoid membrane. The enzyme catalyses a plastoquinone + NADH + (n+1) H(+)(in) = a plastoquinol + NAD(+) + n H(+)(out). It catalyses the reaction a plastoquinone + NADPH + (n+1) H(+)(in) = a plastoquinol + NADP(+) + n H(+)(out). The chain is NAD(P)H-quinone oxidoreductase chain 4, chloroplastic from Saccharum officinarum (Sugarcane).